A 505-amino-acid chain; its full sequence is Pleckstrin homology domain-containing family D member 1 (505 aa).

Positions 28-136 (KVQLYGVLWK…WLEMLQESGK (109 aa)) constitute a PH domain. Positions 146 to 391 (EAMIKSLEAQ…KVRNKEKEER (246 aa)) form a coiled coil. Positions 264–284 (DKNQPQPLTNQSEQPPASDGL) are disordered. Polar residues predominate over residues 267–278 (QPQPLTNQSEQP). Arg-502 is subject to Omega-N-methylarginine.

The protein belongs to the PLEKHD1 family.

In Mus musculus (Mouse), this protein is Pleckstrin homology domain-containing family D member 1 (Plekhd1).